We begin with the raw amino-acid sequence, 181 residues long: Ferredoxin C 2, chloroplastic (181 aa).

The N-terminal 44 residues, 1-44 (MALILPCTFCTSLQKKNFPINRRYITNFRRGATTATCEFRIPVE), are a transit peptide targeting the chloroplast. Positions 59 to 151 (HKVTVHDRQR…DLEVETQDED (93 aa)) constitute a 2Fe-2S ferredoxin-type domain. [2Fe-2S] cluster is bound by residues Cys97, Cys102, Cys105, and Cys135.

Belongs to the 2Fe2S plant-type ferredoxin family. Requires [2Fe-2S] cluster as cofactor.

Its subcellular location is the plastid. The protein resides in the chloroplast. Ferredoxins are iron-sulfur proteins that transfer electrons in a wide variety of metabolic reactions. Mediates alternative electron partitioning in conditions of acceptor limitation at photosystem I. In Arabidopsis thaliana (Mouse-ear cress), this protein is Ferredoxin C 2, chloroplastic.